A 430-amino-acid chain; its full sequence is Phosphoglucosamine mutase (430 aa).

The active-site Phosphoserine intermediate is the S93. Mg(2+) contacts are provided by S93, D227, D229, and D231. S93 bears the Phosphoserine mark.

Belongs to the phosphohexose mutase family. The cofactor is Mg(2+). Post-translationally, activated by phosphorylation.

The catalysed reaction is alpha-D-glucosamine 1-phosphate = D-glucosamine 6-phosphate. In terms of biological role, catalyzes the conversion of glucosamine-6-phosphate to glucosamine-1-phosphate. The chain is Phosphoglucosamine mutase from Thermosipho africanus (strain TCF52B).